The chain runs to 250 residues: Pyridoxine 5'-phosphate synthase (250 aa).

N8 and R19 together coordinate 3-amino-2-oxopropyl phosphate. The active-site Proton acceptor is H44. Positions 46 and 51 each coordinate 1-deoxy-D-xylulose 5-phosphate. E76 acts as the Proton acceptor in catalysis. T106 serves as a coordination point for 1-deoxy-D-xylulose 5-phosphate. H200 serves as the catalytic Proton donor. 3-amino-2-oxopropyl phosphate-binding positions include D201 and 223–224 (GH).

The protein belongs to the PNP synthase family. Homooctamer; tetramer of dimers.

Its subcellular location is the cytoplasm. It carries out the reaction 3-amino-2-oxopropyl phosphate + 1-deoxy-D-xylulose 5-phosphate = pyridoxine 5'-phosphate + phosphate + 2 H2O + H(+). It participates in cofactor biosynthesis; pyridoxine 5'-phosphate biosynthesis; pyridoxine 5'-phosphate from D-erythrose 4-phosphate: step 5/5. In terms of biological role, catalyzes the complicated ring closure reaction between the two acyclic compounds 1-deoxy-D-xylulose-5-phosphate (DXP) and 3-amino-2-oxopropyl phosphate (1-amino-acetone-3-phosphate or AAP) to form pyridoxine 5'-phosphate (PNP) and inorganic phosphate. The polypeptide is Pyridoxine 5'-phosphate synthase (Rhizobium meliloti (strain 1021) (Ensifer meliloti)).